A 363-amino-acid polypeptide reads, in one-letter code: MKIEQIQLVQFRNHKNLSYGPAEGINLLYGPNGSGKTSVLEGIHYCALTKGFVTAYDSECLAFGESFFLINGRFISDALKEDGVKVVYSRDNGKKLTVNGQDLTSFSQHIGSIPCITFSPAEMSVINGSPVERRRFLDNAICQADCRYLQSMLNYRRVLLQRNALLLQLKERVQSIEMLNVLTEQLSEYAADIVFARLRFLDEILPGLKAILSSVSVKEEPRITYRSSLVPSVYALTKEELINYFREQYAKKKQDEIARGLTAGGPHRDDIVFFLNQHEIKKYASQGQQRSFLIAMKMALYGYFSDKLNEKPVCLFDDLFSELDRSRVEVLFALLASFGQVFITATEKMHGPAVTTINIPEAI.

ATP is bound at residue 30-37; it reads GPNGSGKT.

Belongs to the RecF family.

It localises to the cytoplasm. The RecF protein is involved in DNA metabolism; it is required for DNA replication and normal SOS inducibility. RecF binds preferentially to single-stranded, linear DNA. It also seems to bind ATP. This chain is DNA replication and repair protein RecF, found in Chlorobium limicola (strain DSM 245 / NBRC 103803 / 6330).